We begin with the raw amino-acid sequence, 399 residues long: Guanine nucleotide-binding protein G(f) subunit alpha (399 aa).

Residues 46 to 399 (TTVKILLLGT…SENVSSMGLF (354 aa)) form the G-alpha domain. A G1 motif region spans residues 49 to 62 (KILLLGTAESGKTT). GTP is bound by residues 54–61 (GTAESGKT), 188–194 (LHSRKIT), 221–225 (DVGGQ), 290–293 (NKYD), and A371. The segment at 186-194 (DILHSRKIT) is G2 motif. A Mg(2+)-binding site is contributed by T194. Positions 217–226 (FQMYDVGGQR) are G3 motif. The interval 286–293 (IVFLNKYD) is G4 motif. Positions 369–374 (TVATDT) are G5 motif.

This sequence belongs to the G-alpha family. As to quaternary structure, g proteins are composed of 3 units; alpha, beta and gamma. The alpha chain contains the guanine nucleotide binding site. In terms of tissue distribution, during embryogenesis, expressed primarily in the developing gut and transiently in the amnioserosa.

Its function is as follows. Guanine nucleotide-binding proteins (G proteins) are involved as modulators or transducers in various transmembrane signaling systems. This Drosophila melanogaster (Fruit fly) protein is Guanine nucleotide-binding protein G(f) subunit alpha (Galphaf).